A 321-amino-acid polypeptide reads, in one-letter code: Malate dehydrogenase (321 aa).

NAD(+)-binding positions include 10 to 15 (GSGMIG) and D34. R83 and R89 together coordinate substrate. NAD(+) is bound by residues N96 and 119–121 (ITN). Residues N121 and R152 each contribute to the substrate site. The active-site Proton acceptor is H176.

This sequence belongs to the LDH/MDH superfamily. MDH type 3 family.

The enzyme catalyses (S)-malate + NAD(+) = oxaloacetate + NADH + H(+). Catalyzes the reversible oxidation of malate to oxaloacetate. This is Malate dehydrogenase from Bartonella bacilliformis (strain ATCC 35685 / KC583 / Herrer 020/F12,63).